Consider the following 78-residue polypeptide: Protein SlyX homolog (78 aa).

The protein belongs to the SlyX family.

The polypeptide is Protein SlyX homolog (Xanthomonas axonopodis pv. citri (strain 306)).